Reading from the N-terminus, the 45-residue chain is Large ribosomal subunit protein bL34 (45 aa).

The protein belongs to the bacterial ribosomal protein bL34 family.

This chain is Large ribosomal subunit protein bL34, found in Arthrobacter sp. (strain FB24).